A 456-amino-acid chain; its full sequence is MNDTIAAVSTSSGAGAIGIIRMSGPEALTISSSFLFSKNKFLSPSEILPRTAIQCVFQIGDRKIDQILFFYFKSPNSYTGEDLCEFHFHGNPILLREALDAIFRAGARPAKQGEFSRRAFLNEKLDLTEVEAIGRLISARSRFELELAQKNVFGEVTRFTSNLRSQLISLKAECEAEIDFSTEDLTYESLEERKTRIENVKSLCQTLISKSSSAEKLIQQFRIVLYGEPNTGKSSLMNVLLGKERSIISEIPGTTRDYISEEIFLEGIPVRLVDTAGVRETTDHIEKLGIERSEKEFQSADVRLFLVDVSKKENWKEFINKSRERLEGSILIANKIDILNSSWDRNLFSDVKDLIVLEISCKTKEGISNLLDAIKERTGKLGHSEDYVLLEERQRYHFETIVRCLDKTLHLLKEGAPAEIYIQEINYALAEIGEVNGKVDTEEVLGRIFSKFCVGK.

(6S)-5-formyl-5,6,7,8-tetrahydrofolate is bound by residues Arg-21, Glu-85, and Lys-124. Positions 220-379 constitute a TrmE-type G domain; that stretch reads QFRIVLYGEP…LLDAIKERTG (160 aa). Asn-230 contributes to the K(+) binding site. Residues 230 to 235, 249 to 255, and 274 to 277 contribute to the GTP site; these read NTGKSS, SEIPGTT, and DTAG. Ser-234 provides a ligand contact to Mg(2+). K(+)-binding residues include Ser-249, Ile-251, and Thr-254. Thr-255 is a binding site for Mg(2+). Lys-456 serves as a coordination point for (6S)-5-formyl-5,6,7,8-tetrahydrofolate.

This sequence belongs to the TRAFAC class TrmE-Era-EngA-EngB-Septin-like GTPase superfamily. TrmE GTPase family. Homodimer. Heterotetramer of two MnmE and two MnmG subunits. The cofactor is K(+).

The protein localises to the cytoplasm. In terms of biological role, exhibits a very high intrinsic GTPase hydrolysis rate. Involved in the addition of a carboxymethylaminomethyl (cmnm) group at the wobble position (U34) of certain tRNAs, forming tRNA-cmnm(5)s(2)U34. In Leptospira interrogans serogroup Icterohaemorrhagiae serovar copenhageni (strain Fiocruz L1-130), this protein is tRNA modification GTPase MnmE.